We begin with the raw amino-acid sequence, 389 residues long: Coproporphyrin III ferrochelatase (389 aa).

Fe-coproporphyrin III contacts are provided by S70 and Y139. Fe(2+) is bound at residue H205. The tract at residues 207–229 (IPSTDAGKSGPSGRPDSGEPWGE) is disordered. Fe(2+) is bound at residue E303.

Belongs to the ferrochelatase family.

The protein resides in the cytoplasm. The enzyme catalyses Fe-coproporphyrin III + 2 H(+) = coproporphyrin III + Fe(2+). Its pathway is porphyrin-containing compound metabolism; protoheme biosynthesis. Involved in coproporphyrin-dependent heme b biosynthesis. Catalyzes the insertion of ferrous iron into coproporphyrin III to form Fe-coproporphyrin III. This chain is Coproporphyrin III ferrochelatase, found in Leifsonia xyli subsp. xyli (strain CTCB07).